The chain runs to 357 residues: GDP-mannose transporter 2 (357 aa).

Residues 1–33 (MASARNGVSKDELLPVYERRSQRDGDISGSVKS) are Cytoplasmic-facing. Residues 34–54 (FASTIGNSASAAVLAYCLSSI) form a helical membrane-spanning segment. The Lumenal portion of the chain corresponds to 55-68 (SMTLVNKYVVSGAS). The helical transmembrane segment at 69 to 89 (WNLSFLYLAMQSFIGTVAILA) threads the bilayer. The Cytoplasmic portion of the chain corresponds to 90–107 (CKKTGLIQNLALFDLKKA). The chain crosses the membrane as a helical span at residues 108–128 (QTWLPISLLLVGMIYTGNKAL). Gln129 is a topological domain (lumenal). The chain crosses the membrane as a helical span at residues 130–150 (FLSVPVYTIFKNLTIIVIAYG). Residues 151–161 (EVLMVGGGVKP) lie on the Cytoplasmic side of the membrane. Residues 162–181 (LALLSFGLMVLSSVVAAWAD) form a helical membrane-spanning segment. Residues 182–196 (IQNATTATVGASSDS) lie on the Lumenal side of the membrane. Asn184 is a glycosylation site (N-linked (GlcNAc...) asparagine). The chain crosses the membrane as a helical span at residues 197–217 (TAAALSALNAGYAWMGTNVIF). At 218 to 236 (SASYALGMRRVIKKTNFDN) the chain is on the cytoplasmic side. A helical transmembrane segment spans residues 237–257 (WDVMFYNNLLSIPILLLASVL). The Lumenal portion of the chain corresponds to 258–277 (AEDWSSENLQRNFPAELRQS). A helical transmembrane segment spans residues 278–298 (LFIGILYSGVAAVFISYCTAW). Residues 299–306 (CVRATSST) are Cytoplasmic-facing. Residues 307 to 327 (TYAMVGALNKLPLAVAGIVFF) traverse the membrane as a helical segment. Residues 328–332 (AAPVT) are Lumenal-facing. The helical transmembrane segment at 333-352 (FGSVSAIVLGFISGLVYARA) threads the bilayer. Over 353-357 (KSTGA) the chain is Cytoplasmic.

The protein belongs to the TPT transporter family. SLC35D subfamily. In terms of assembly, homooligomer.

It localises to the golgi apparatus membrane. The protein resides in the cytoplasmic vesicle membrane. The protein localises to the endoplasmic reticulum membrane. Involved in the import of GDP-mannose from the cytoplasm into the Golgi lumen. The sequence is that of GDP-mannose transporter 2 (gmt2) from Neosartorya fischeri (strain ATCC 1020 / DSM 3700 / CBS 544.65 / FGSC A1164 / JCM 1740 / NRRL 181 / WB 181) (Aspergillus fischerianus).